A 301-amino-acid polypeptide reads, in one-letter code: N-acetylmuramic acid 6-phosphate etherase (301 aa).

Positions 57-220 (VVERLRAGGR…STISMVRLGK (164 aa)) constitute an SIS domain. The active-site Proton donor is Glu-85. Residue Glu-116 is part of the active site.

Belongs to the GCKR-like family. MurNAc-6-P etherase subfamily. Homodimer.

It catalyses the reaction N-acetyl-D-muramate 6-phosphate + H2O = N-acetyl-D-glucosamine 6-phosphate + (R)-lactate. Its pathway is amino-sugar metabolism; N-acetylmuramate degradation. Functionally, specifically catalyzes the cleavage of the D-lactyl ether substituent of MurNAc 6-phosphate, producing GlcNAc 6-phosphate and D-lactate. The polypeptide is N-acetylmuramic acid 6-phosphate etherase (Rubrobacter xylanophilus (strain DSM 9941 / JCM 11954 / NBRC 16129 / PRD-1)).